Reading from the N-terminus, the 280-residue chain is Energy-coupling factor transporter ATP-binding protein EcfA2 (280 aa).

The region spanning 3–245 is the ABC transporter domain; it reads IEFKNVSYTY…VELLESKQLG (243 aa). 40–47 is an ATP binding site; it reads GHTGSGKS.

Belongs to the ABC transporter superfamily. Energy-coupling factor EcfA family. In terms of assembly, forms a stable energy-coupling factor (ECF) transporter complex composed of 2 membrane-embedded substrate-binding proteins (S component), 2 ATP-binding proteins (A component) and 2 transmembrane proteins (T component).

The protein localises to the cell membrane. Functionally, ATP-binding (A) component of a common energy-coupling factor (ECF) ABC-transporter complex. Unlike classic ABC transporters this ECF transporter provides the energy necessary to transport a number of different substrates. In Streptococcus agalactiae serotype Ia (strain ATCC 27591 / A909 / CDC SS700), this protein is Energy-coupling factor transporter ATP-binding protein EcfA2.